Consider the following 159-residue polypeptide: Ribosomal RNA large subunit methyltransferase H (159 aa).

The S-adenosyl-L-methionine site is built by L76 and G108.

It belongs to the RNA methyltransferase RlmH family. Homodimer.

The protein localises to the cytoplasm. The catalysed reaction is pseudouridine(1915) in 23S rRNA + S-adenosyl-L-methionine = N(3)-methylpseudouridine(1915) in 23S rRNA + S-adenosyl-L-homocysteine + H(+). Specifically methylates the pseudouridine at position 1915 (m3Psi1915) in 23S rRNA. The polypeptide is Ribosomal RNA large subunit methyltransferase H (Ligilactobacillus salivarius (strain UCC118) (Lactobacillus salivarius)).